The primary structure comprises 881 residues: Disks large homolog 2 (881 aa).

Disordered stretches follow at residues 16-41 (HRQQ…MNPA) and 63-88 (LSTT…SFPR). 3 consecutive PDZ domains span residues 155–242 (EITL…RRRR), 250–337 (EIKL…GKPT), and 424–505 (KIVL…QYRP). One can recognise an SH3 domain in the interval 539-609 (KRSLYVRALF…PSKRRVERKE (71 aa)). Positions 683–866 (ARPVIILGPM…IYNQCKMVIE (184 aa)) constitute a Guanylate kinase-like domain. The disordered stretch occupies residues 709 to 729 (GSCVPPANSSDQEDTTRPKRD).

Belongs to the MAGUK family.

It is found in the cell membrane. The protein resides in the postsynaptic density. The protein localises to the synapse. It localises to the membrane. Its subcellular location is the cell projection. It is found in the axon. The protein resides in the perikaryon. Functionally, may play a role in synapse assembly and function. The polypeptide is Disks large homolog 2 (dlg2) (Danio rerio (Zebrafish)).